A 441-amino-acid chain; its full sequence is UDP-N-acetylglucosamine--N-acetylmuramyl-(pentapeptide) pyrophosphoryl-undecaprenol N-acetylglucosamine transferase (441 aa).

Residues 28–30 (TGG), asparagine 140, arginine 176, serine 204, isoleucine 257, and glutamine 302 each bind UDP-N-acetyl-alpha-D-glucosamine.

Belongs to the glycosyltransferase 28 family. MurG subfamily.

The protein resides in the cell inner membrane. It carries out the reaction di-trans,octa-cis-undecaprenyl diphospho-N-acetyl-alpha-D-muramoyl-L-alanyl-D-glutamyl-meso-2,6-diaminopimeloyl-D-alanyl-D-alanine + UDP-N-acetyl-alpha-D-glucosamine = di-trans,octa-cis-undecaprenyl diphospho-[N-acetyl-alpha-D-glucosaminyl-(1-&gt;4)]-N-acetyl-alpha-D-muramoyl-L-alanyl-D-glutamyl-meso-2,6-diaminopimeloyl-D-alanyl-D-alanine + UDP + H(+). The protein operates within cell wall biogenesis; peptidoglycan biosynthesis. In terms of biological role, cell wall formation. Catalyzes the transfer of a GlcNAc subunit on undecaprenyl-pyrophosphoryl-MurNAc-pentapeptide (lipid intermediate I) to form undecaprenyl-pyrophosphoryl-MurNAc-(pentapeptide)GlcNAc (lipid intermediate II). The protein is UDP-N-acetylglucosamine--N-acetylmuramyl-(pentapeptide) pyrophosphoryl-undecaprenol N-acetylglucosamine transferase of Xanthomonas oryzae pv. oryzae (strain MAFF 311018).